Here is a 156-residue protein sequence, read N- to C-terminus: Small ribosomal subunit protein uS7 (156 aa).

It belongs to the universal ribosomal protein uS7 family. Part of the 30S ribosomal subunit. Contacts proteins S9 and S11.

Its function is as follows. One of the primary rRNA binding proteins, it binds directly to 16S rRNA where it nucleates assembly of the head domain of the 30S subunit. Is located at the subunit interface close to the decoding center, probably blocks exit of the E-site tRNA. This is Small ribosomal subunit protein uS7 from Mycobacterium tuberculosis (strain CDC 1551 / Oshkosh).